Consider the following 68-residue polypeptide: Large ribosomal subunit protein uL29 (68 aa).

Belongs to the universal ribosomal protein uL29 family.

The sequence is that of Large ribosomal subunit protein uL29 (rpl29) from Pyrococcus horikoshii (strain ATCC 700860 / DSM 12428 / JCM 9974 / NBRC 100139 / OT-3).